Consider the following 201-residue polypeptide: 3-isopropylmalate dehydratase small subunit (201 aa).

Belongs to the LeuD family. LeuD type 1 subfamily. As to quaternary structure, heterodimer of LeuC and LeuD.

It carries out the reaction (2R,3S)-3-isopropylmalate = (2S)-2-isopropylmalate. Its pathway is amino-acid biosynthesis; L-leucine biosynthesis; L-leucine from 3-methyl-2-oxobutanoate: step 2/4. Functionally, catalyzes the isomerization between 2-isopropylmalate and 3-isopropylmalate, via the formation of 2-isopropylmaleate. The chain is 3-isopropylmalate dehydratase small subunit from Allorhizobium ampelinum (strain ATCC BAA-846 / DSM 112012 / S4) (Agrobacterium vitis (strain S4)).